The primary structure comprises 1068 residues: Carbamoyl phosphate synthase large chain (1068 aa).

A carboxyphosphate synthetic domain region spans residues 1 to 401 (MPLNKDIKKV…AFLKGIRSLE (401 aa)). Residues R129, R169, G175, G176, K208, V210, E215, G241, I242, H243, Q284, and E298 each coordinate ATP. The region spanning 133–327 (RNVMSRINEP…IAKVAAKIAL (195 aa)) is the ATP-grasp 1 domain. The Mg(2+) site is built by Q284, E298, and N300. Positions 284, 298, and 300 each coordinate Mn(2+). Residues 402 to 549 (IGKYSLEHKK…YSTYDVYDEV (148 aa)) form an oligomerization domain region. The tract at residues 550 to 932 (EVSKNKKVIV…ALYKGFIGAN (383 aa)) is carbamoyl phosphate synthetic domain. The region spanning 674 to 864 (DELLEKLQIS…IVDIATRVML (191 aa)) is the ATP-grasp 2 domain. ATP is bound by residues R710, K749, L751, E755, G780, V781, H782, S783, Q823, and E835. Mg(2+) contacts are provided by Q823, E835, and N837. Residues Q823, E835, and N837 each coordinate Mn(2+). Residues 933 to 1068 (MSIKKEKGTI…ETLHIFDLSN (136 aa)) form the MGS-like domain. The allosteric domain stretch occupies residues 933 to 1068 (MSIKKEKGTI…ETLHIFDLSN (136 aa)).

This sequence belongs to the CarB family. In terms of assembly, composed of two chains; the small (or glutamine) chain promotes the hydrolysis of glutamine to ammonia, which is used by the large (or ammonia) chain to synthesize carbamoyl phosphate. Tetramer of heterodimers (alpha,beta)4. It depends on Mg(2+) as a cofactor. The cofactor is Mn(2+).

It carries out the reaction hydrogencarbonate + L-glutamine + 2 ATP + H2O = carbamoyl phosphate + L-glutamate + 2 ADP + phosphate + 2 H(+). It catalyses the reaction hydrogencarbonate + NH4(+) + 2 ATP = carbamoyl phosphate + 2 ADP + phosphate + 2 H(+). It functions in the pathway amino-acid biosynthesis; L-arginine biosynthesis; carbamoyl phosphate from bicarbonate: step 1/1. Its pathway is pyrimidine metabolism; UMP biosynthesis via de novo pathway; (S)-dihydroorotate from bicarbonate: step 1/3. Functionally, large subunit of the glutamine-dependent carbamoyl phosphate synthetase (CPSase). CPSase catalyzes the formation of carbamoyl phosphate from the ammonia moiety of glutamine, carbonate, and phosphate donated by ATP, constituting the first step of 2 biosynthetic pathways, one leading to arginine and/or urea and the other to pyrimidine nucleotides. The large subunit (synthetase) binds the substrates ammonia (free or transferred from glutamine from the small subunit), hydrogencarbonate and ATP and carries out an ATP-coupled ligase reaction, activating hydrogencarbonate by forming carboxy phosphate which reacts with ammonia to form carbamoyl phosphate. The sequence is that of Carbamoyl phosphate synthase large chain from Clostridium botulinum (strain Loch Maree / Type A3).